Reading from the N-terminus, the 79-residue chain is Acyl carrier protein (79 aa).

The Carrier domain maps to 2–77 (SDIGERVKKI…DATKFLEKNA (76 aa)). At Ser37 the chain carries O-(pantetheine 4'-phosphoryl)serine.

The protein belongs to the acyl carrier protein (ACP) family. Post-translationally, 4'-phosphopantetheine is transferred from CoA to a specific serine of apo-ACP by AcpS. This modification is essential for activity because fatty acids are bound in thioester linkage to the sulfhydryl of the prosthetic group.

It localises to the cytoplasm. It participates in lipid metabolism; fatty acid biosynthesis. In terms of biological role, carrier of the growing fatty acid chain in fatty acid biosynthesis. The protein is Acyl carrier protein of Bradyrhizobium diazoefficiens (strain JCM 10833 / BCRC 13528 / IAM 13628 / NBRC 14792 / USDA 110).